The following is a 539-amino-acid chain: MELAMDFALRLRDAANHHLSRYEPLVLLAAPLLALLAARTLHAAAAAVADRGLRTVLLALAMTAIKLLPGVSAYINAEKRKVVDQLQSGGTSTKSTLRTELPTVGLSNQVINDLETLKARDVNWQGKCSGTVYIAGSESEGHFALINKAYSMFSHTNPLHQDVFKSVAQLEAEVVAMTAALLGIKEKSSGGQICGNMTSGGTESILLAVKTSRDYMRTKKGITKPEMIIAESAHSAYDKAAQYFNIKVRRVPVNKEFLADVKGFKRCINGNTIMMVGSAPGFPHGLIDPIEELGELASRYDICLHVDLCLGGFVLPFARKLGYPIPPFDFCVKGVTSISTDVHKYGLAPKGTSIVLYKNHEIRKHQFVAVTEWTGGLYVSPTIAGSRPGGLIAGAWAAMTSLGLNGYMENTGHIMEVSKKIQRGIEDIPGLFVIGKPDMTVVAFGSDSVDIFEVNDIMSSKGWHLNALQRPNSLHICVTLQHTVIYEEFLKDLKDSVDTVKANPGPISGGRAPIYGAAGKMPDRGMVRELLVEFMDASC.

Residues 1–46 (MELAMDFALRLRDAANHHLSRYEPLVLLAAPLLALLAARTLHAAAA) form the signal peptide. Topologically, residues 47-54 (AVADRGLR) are lumenal. The helical transmembrane segment at 55-75 (TVLLALAMTAIKLLPGVSAYI) threads the bilayer. The Cytoplasmic segment spans residues 76–539 (NAEKRKVVDQ…LLVEFMDASC (464 aa)). Lys-344 is modified (N6-(pyridoxal phosphate)lysine).

Belongs to the group II decarboxylase family. Sphingosine-1-phosphate lyase subfamily. The cofactor is pyridoxal 5'-phosphate.

Its subcellular location is the endoplasmic reticulum membrane. The catalysed reaction is sphinganine 1-phosphate = hexadecanal + phosphoethanolamine. The protein operates within lipid metabolism; sphingolipid metabolism. Cleaves phosphorylated sphingoid bases (PSBs), such as sphingosine-1-phosphate, into fatty aldehydes and phosphoethanolamine. Elevates stress-induced ceramide production and apoptosis. This is Sphingosine-1-phosphate lyase (SPL) from Oryza sativa subsp. japonica (Rice).